The chain runs to 405 residues: MAKGTFERTKPHVNIGTIGHVDHGKTTLTAAITFTAASADPTIETLAYDQIDKAPEEKARGITINTAHVEYQTETRHYSHVDCPGHADYVKNMITGAAQMDGAILVVSSADGPMPQTREHILLARQVGVPYIVVFMNKVDMVDDEELLELVEMEVRELLSKYEFPGDDLPVVKGSALRALEALQSNPKMARGTDKWVDYIWELLDAVDSYIPTPERDTDKTFLMPVEDVFTITGRGTVATGRVERGTVKVQDEVEIVGLTDTRKTTVTGIEMHRKLLDSGMAGDNVGVLLRGVARDDVERGQVLAKPGSIKPHTKFEASVYVLSKDEGGRHSAFFGGYRPQFYFRTTDVTGVVELQEGVEMVMPGDNVTFTVELIKPIAMEEGLRFAIREGGRTVGAGVVSKVLE.

One can recognise a tr-type G domain in the interval K10–E215. The interval G19–T26 is G1. G19–T26 is a binding site for GTP. T26 contributes to the Mg(2+) binding site. The interval G61–N65 is G2. The interval D82–G85 is G3. GTP contacts are provided by residues D82–H86 and N137–D140. Residues N137–D140 form a G4 region. The segment at S175–L177 is G5.

This sequence belongs to the TRAFAC class translation factor GTPase superfamily. Classic translation factor GTPase family. EF-Tu/EF-1A subfamily. As to quaternary structure, monomer.

Its subcellular location is the cytoplasm. It catalyses the reaction GTP + H2O = GDP + phosphate + H(+). In terms of biological role, GTP hydrolase that promotes the GTP-dependent binding of aminoacyl-tRNA to the A-site of ribosomes during protein biosynthesis. The chain is Elongation factor Tu from Deinococcus radiodurans (strain ATCC 13939 / DSM 20539 / JCM 16871 / CCUG 27074 / LMG 4051 / NBRC 15346 / NCIMB 9279 / VKM B-1422 / R1).